We begin with the raw amino-acid sequence, 508 residues long: GMP synthase [glutamine-hydrolyzing] (508 aa).

The 189-residue stretch at 1–189 (MILVLDFGSQ…ALLVCGCEKT (189 aa)) folds into the Glutamine amidotransferase type-1 domain. The active-site Nucleophile is Cys78. Active-site residues include His163 and Glu165. The GMPS ATP-PPase domain occupies 190-383 (WGMQHFAQRE…LGVSQDFLMH (194 aa)). 217–223 (SGGVDST) lines the ATP pocket.

Homodimer.

It catalyses the reaction XMP + L-glutamine + ATP + H2O = GMP + L-glutamate + AMP + diphosphate + 2 H(+). It functions in the pathway purine metabolism; GMP biosynthesis; GMP from XMP (L-Gln route): step 1/1. In terms of biological role, catalyzes the synthesis of GMP from XMP. The polypeptide is GMP synthase [glutamine-hydrolyzing] (Helicobacter pylori (strain G27)).